The chain runs to 101 residues: Small ribosomal subunit protein uS14 (101 aa).

Residues 51-70 (LPRDSSPSRQRNRCSQTGRP) are disordered. Over residues 52-68 (PRDSSPSRQRNRCSQTG) the composition is skewed to polar residues.

This sequence belongs to the universal ribosomal protein uS14 family. As to quaternary structure, part of the 30S ribosomal subunit. Contacts proteins S3 and S10.

Its function is as follows. Binds 16S rRNA, required for the assembly of 30S particles and may also be responsible for determining the conformation of the 16S rRNA at the A site. This is Small ribosomal subunit protein uS14 from Mannheimia succiniciproducens (strain KCTC 0769BP / MBEL55E).